Reading from the N-terminus, the 315-residue chain is Cysteine proteinase 1 (315 aa).

The first 13 residues, 1–13 (MFTFILMFYIGYG), serve as a signal peptide directing secretion. Positions 14 to 93 (IDFNTWVANN…KGEVRYLNIQ (80 aa)) are cleaved as a propeptide — activation peptide. 2 cysteine pairs are disulfide-bonded: Cys-115/Cys-161 and Cys-152/Cys-193. Residue Cys-118 is part of the active site. Catalysis depends on residues His-259 and Asn-279.

It belongs to the peptidase C1 family.

The protein resides in the lysosome. Its activity is regulated as follows. Inhibited by cysteine protease inhibitors ICP1 and ICP2. Functionally, cysteine protease which degrades matrix proteins such as collagen, laminin and fibronectin and thus is involved in the destruction of human tissue. Can abolish adhesion. May play an important role in pathogenicity. The polypeptide is Cysteine proteinase 1 (Entamoeba histolytica (strain ATCC 30459 / HM-1:IMSS / ABRM)).